The primary structure comprises 391 residues: Tryptophan synthase beta chain (391 aa).

K86 carries the N6-(pyridoxal phosphate)lysine modification.

It belongs to the TrpB family. In terms of assembly, tetramer of two alpha and two beta chains. The cofactor is pyridoxal 5'-phosphate.

It carries out the reaction (1S,2R)-1-C-(indol-3-yl)glycerol 3-phosphate + L-serine = D-glyceraldehyde 3-phosphate + L-tryptophan + H2O. Its pathway is amino-acid biosynthesis; L-tryptophan biosynthesis; L-tryptophan from chorismate: step 5/5. In terms of biological role, the beta subunit is responsible for the synthesis of L-tryptophan from indole and L-serine. This Vibrio metschnikovii protein is Tryptophan synthase beta chain.